Consider the following 218-residue polypeptide: Host range factor 1 (218 aa).

In terms of biological role, facilitates AcMNPV replication in two non-permissive cell lines, IPLB-Ld652Y and IPLB-LdFB. The sequence is that of Host range factor 1 (HRF-1) from Lepidoptera (butterflies and moths).